The chain runs to 310 residues: Homoserine kinase (310 aa).

91–101 (PLARGLGSSAA) lines the ATP pocket.

Belongs to the GHMP kinase family. Homoserine kinase subfamily.

It is found in the cytoplasm. It carries out the reaction L-homoserine + ATP = O-phospho-L-homoserine + ADP + H(+). It participates in amino-acid biosynthesis; L-threonine biosynthesis; L-threonine from L-aspartate: step 4/5. Functionally, catalyzes the ATP-dependent phosphorylation of L-homoserine to L-homoserine phosphate. The chain is Homoserine kinase from Bacillus pumilus (strain SAFR-032).